The chain runs to 293 residues: Methylsterol monooxygenase 1 (293 aa).

Helical transmembrane passes span Leu55–Ile75 and Gly100–Thr120. The Fatty acid hydroxylase domain occupies Gly144–Thr274. The Histidine box-1 motif lies at His157 to His161. The Histidine box-2 signature appears at His170 to His174. A helical transmembrane segment spans residues Phe199–Met219. A Histidine box-3 motif is present at residues His249–Met255.

It belongs to the sterol desaturase family. Requires Fe cation as cofactor. In terms of processing, ubiquitinated by MARCHF6, leading to proteasomal degradation.

Its subcellular location is the endoplasmic reticulum membrane. It carries out the reaction 4,4-dimethyl-5alpha-cholest-7-en-3beta-ol + 6 Fe(II)-[cytochrome b5] + 3 O2 + 5 H(+) = 4alpha-carboxy-4beta-methyl-5alpha-cholest-7-ene-3beta-ol + 6 Fe(III)-[cytochrome b5] + 4 H2O. It catalyses the reaction 4,4-dimethyl-5alpha-cholesta-8,24-dien-3beta-ol + 6 Fe(II)-[cytochrome b5] + 3 O2 + 5 H(+) = 4beta-methylzymosterol-4alpha-carboxylate + 6 Fe(III)-[cytochrome b5] + 4 H2O. The enzyme catalyses 4alpha-methylzymosterol + 6 Fe(II)-[cytochrome b5] + 3 O2 + 5 H(+) = 4alpha-carboxyzymosterol + 6 Fe(III)-[cytochrome b5] + 4 H2O. The catalysed reaction is 4alpha-methyl-5alpha-cholest-7-en-3beta-ol + 6 Fe(II)-[cytochrome b5] + 3 O2 + 5 H(+) = 4alpha-carboxy-5alpha-cholest-7-en-3beta-ol + 6 Fe(III)-[cytochrome b5] + 4 H2O. It carries out the reaction 4,4-dimethyl-5alpha-cholest-8-en-3beta-ol + 6 Fe(II)-[cytochrome b5] + 3 O2 + 5 H(+) = 4alpha-carboxy-4beta-methyl-5alpha-cholest-8-en-3beta-ol + 6 Fe(III)-[cytochrome b5] + 4 H2O. It catalyses the reaction 4alpha-methyl-5alpha-cholest-8-en-3beta-ol + 6 Fe(II)-[cytochrome b5] + 3 O2 + 5 H(+) = 4alpha-carboxy-5alpha-cholest-8-ene-3beta-ol + 6 Fe(III)-[cytochrome b5] + 4 H2O. It functions in the pathway steroid biosynthesis; zymosterol biosynthesis; zymosterol from lanosterol: step 3/6. The protein operates within steroid biosynthesis; cholesterol biosynthesis. Functionally, catalyzes the three-step monooxygenation required for the demethylation of 4,4-dimethyl and 4alpha-methylsterols, which can be subsequently metabolized to cholesterol. This Rattus norvegicus (Rat) protein is Methylsterol monooxygenase 1 (Msmo1).